A 136-amino-acid chain; its full sequence is Large ribosomal subunit protein uL16 (136 aa).

The protein belongs to the universal ribosomal protein uL16 family. In terms of assembly, part of the 50S ribosomal subunit.

In terms of biological role, binds 23S rRNA and is also seen to make contacts with the A and possibly P site tRNAs. This is Large ribosomal subunit protein uL16 from Shewanella pealeana (strain ATCC 700345 / ANG-SQ1).